We begin with the raw amino-acid sequence, 93 residues long: UPF0728 protein C10orf53 homolog (93 aa).

This sequence belongs to the UPF0728 family.

This is UPF0728 protein C10orf53 homolog from Bos taurus (Bovine).